A 162-amino-acid chain; its full sequence is ATP-dependent Clp protease adapter protein CLPS1, chloroplastic (162 aa).

A chloroplast-targeting transit peptide spans 1–58 (MAASCLRPAPTASAQMMTRSPVAGLPRPCSALQRSGCTLQGAFGTFAPQTTRTFVVTW).

This sequence belongs to the ClpS family.

The protein localises to the plastid. It is found in the chloroplast stroma. In terms of biological role, small adapter protein that modulate the activity of plastid Clp protease system (CLPC). Probably involved in substrate selection for plastid CLPC. This chain is ATP-dependent Clp protease adapter protein CLPS1, chloroplastic, found in Chlamydomonas reinhardtii (Chlamydomonas smithii).